We begin with the raw amino-acid sequence, 72 residues long: Translation initiation factor IF-1 (72 aa).

The S1-like domain occupies 1-72 (MTKEDCIEMQ…SKGRIIFRSR (72 aa)).

Belongs to the IF-1 family. As to quaternary structure, component of the 30S ribosomal translation pre-initiation complex which assembles on the 30S ribosome in the order IF-2 and IF-3, IF-1 and N-formylmethionyl-tRNA(fMet); mRNA recruitment can occur at any time during PIC assembly.

It localises to the cytoplasm. In terms of biological role, one of the essential components for the initiation of protein synthesis. Stabilizes the binding of IF-2 and IF-3 on the 30S subunit to which N-formylmethionyl-tRNA(fMet) subsequently binds. Helps modulate mRNA selection, yielding the 30S pre-initiation complex (PIC). Upon addition of the 50S ribosomal subunit IF-1, IF-2 and IF-3 are released leaving the mature 70S translation initiation complex. The chain is Translation initiation factor IF-1 from Buchnera aphidicola subsp. Baizongia pistaciae (strain Bp).